Reading from the N-terminus, the 395-residue chain is Phosphoglycerate kinase (395 aa).

Substrate is bound by residues 21-23 (DLN), Arg-36, 59-62 (HLGR), Arg-113, and Arg-146. ATP contacts are provided by residues Lys-197, Glu-324, and 350–353 (GGDT).

Belongs to the phosphoglycerate kinase family. As to quaternary structure, monomer.

It is found in the cytoplasm. The catalysed reaction is (2R)-3-phosphoglycerate + ATP = (2R)-3-phospho-glyceroyl phosphate + ADP. Its pathway is carbohydrate degradation; glycolysis; pyruvate from D-glyceraldehyde 3-phosphate: step 2/5. The protein is Phosphoglycerate kinase of Acinetobacter baumannii (strain ATCC 17978 / DSM 105126 / CIP 53.77 / LMG 1025 / NCDC KC755 / 5377).